Consider the following 379-residue polypeptide: Wnt inhibitory factor 1 (379 aa).

The N-terminal stretch at 1–28 (MARRSAFPAAALWLWSILLCLLALRAEA) is a signal peptide. The WIF domain occupies 38 to 177 (LWIDAHQARV…PQNAIFFKTC (140 aa)). N-linked (GlcNAc...) asparagine glycosylation is present at Asn-88. 7 cysteine pairs are disulfide-bonded: Cys-140/Cys-177, Cys-182/Cys-192, Cys-186/Cys-198, Cys-200/Cys-209, Cys-214/Cys-224, Cys-218/Cys-230, and Cys-232/Cys-241. EGF-like domains are found at residues 178-210 (QQAECPGGCRNGGFCNERRICECPDGFHGPHCE), 211-242 (KALCTPRCMNGGLCVTPGFCICPPGFYGVNCD), 243-271 (KANCSTTCFNGGTCFYPGKCICPPGLEGE), 274-306 (EISKCPQPCRNGGKCIGKSKCKCSKGYQGDLCS), and 307-338 (KPVCEPGCGAHGTCHEPNKCQCQEGWHGRHCN). An N-linked (GlcNAc...) asparagine glycan is attached at Asn-245. 8 disulfides stabilise this stretch: Cys-246–Cys-256, Cys-250–Cys-262, Cys-278–Cys-288, Cys-282–Cys-294, Cys-296–Cys-305, Cys-310–Cys-320, Cys-314–Cys-326, and Cys-328–Cys-337. The disordered stretch occupies residues 354–379 (AQLRQHTPSLKKAEERRDPPESNYIW). Over residues 364–373 (KKAEERRDPP) the composition is skewed to basic and acidic residues.

As to quaternary structure, interacts with MYOC.

It localises to the secreted. In terms of biological role, binds to WNT proteins and inhibits their activities. May be involved in mesoderm segmentation. The chain is Wnt inhibitory factor 1 (WIF1) from Homo sapiens (Human).